A 782-amino-acid polypeptide reads, in one-letter code: General transcription and DNA repair factor IIH helicase/translocase subunit XPB (782 aa).

Over residues 1–11 (MGKRDRADRDK) the composition is skewed to basic and acidic residues. Disordered stretches follow at residues 1 to 51 (MGKR…ESGT) and 218 to 241 (SAIS…PQGK). The Nuclear localization signal motif lies at 6–18 (RADRDKKKSRKRH). Over residues 21 to 30 (DEEDDEEDAP) the composition is skewed to acidic residues. A compositionally biased stretch (polar residues) spans 218–236 (SAISKTAESSGGPSTSRVT). Positions 327-488 (MFGNGRARSG…DLNFLIGPKL (162 aa)) constitute a Helicase ATP-binding domain. Position 340-347 (340-347 (LPCGAGKS)) interacts with ATP. Positions 441–444 (DEVH) match the DEVH box motif. The region spanning 542–702 (RACQFLIKFH…LAGMEEEDLA (161 aa)) is the Helicase C-terminal domain. Positions 642 and 645 each coordinate ATP. Phosphoserine is present on Ser686. Ser751 is modified (phosphoserine; by CK2).

The protein belongs to the helicase family. RAD25/XPB subfamily. Component of the 7-subunit TFIIH core complex composed of XPB/ERCC3, XPD/ERCC2, GTF2H1, GTF2H2, GTF2H3, GTF2H4 and GTF2H5, which is active in NER. The core complex associates with the 3-subunit CDK-activating kinase (CAK) module composed of CCNH/cyclin H, CDK7 and MNAT1 to form the 10-subunit holoenzyme (holo-TFIIH) active in transcription. Interacts with PUF60. Interacts with ATF7IP. Interacts with KAT2A; leading to KAT2A recruitment to promoters and acetylation of histones. Part of TBP-based Pol II pre-initiation complex (PIC), in which Pol II core assembles with general transcription factors and other specific initiation factors including GTF2E1, GTF2E2, GTF2F1, GTF2F2, TCEA1, ERCC2, ERCC3, GTF2H2, GTF2H3, GTF2H4, GTF2H5, GTF2A1, GTF2A2, GTF2B and TBP; this large multi-subunit PIC complex mediates DNA unwinding and targets Pol II core to the transcription start site where the first phosphodiester bond forms. As to quaternary structure, (Microbial infection) Interacts with Epstein-Barr virus EBNA2. Post-translationally, phosphorylation on Ser-751 by CK2 controls the 5'-excision activity of ERCC1-XPF endonuclease; phosphorylated protein inhibits the excision activity and thus NER. Dephosphorylation reactivates the 5'-excision step. Phosphorylation has no effect on transcription or the 3'-5' helicase activity.

The protein resides in the nucleus. It carries out the reaction Couples ATP hydrolysis with the unwinding of duplex DNA by translocating in the 3'-5' direction.. It catalyses the reaction ATP + H2O = ADP + phosphate + H(+). With respect to regulation, phosphorylation on Ser-751 by CK2 controls the 5'-excision activity of ERCC1-XPF endonuclease; phosphorylated protein inhibits the excision activity and thus NER. ATPase activity is stimulated by TFIIH subunit p52 (GTF2H4). DNA translocase activity by this subunit in TFIIH is stimulated by XPA, ERCC5/XPG and XFP plus ERCC1; translocase activity is sensitive to triptolide which targets this enzyme. Functionally, ATP-dependent 3'-5' DNA helicase/translocase. Binds dsDNA rather than ssDNA, unzipping it in a translocase rather than classical helicase activity. Component of the general transcription and DNA repair factor IIH (TFIIH) core complex. When complexed to CDK-activating kinase (CAK), involved in RNA transcription by RNA polymerase II. The ATPase activity of XPB/ERCC3, but not its helicase activity, is required for DNA opening; it may wrap around the damaged DNA wedging it open, causing localized melting that allows XPD/ERCC2 helicase to anchor. In transcription, TFIIH has an essential role in transcription initiation. When the pre-initiation complex (PIC) has been established, TFIIH is required for promoter opening and promoter escape. The ATP-dependent helicase activity of XPB/ERCC3 is required for promoter opening and promoter escape. In transcription pre-initiation complexes induces and propagates a DNA twist to open DNA. Also involved in transcription-coupled nucleotide excision repair (NER) of damaged DNA. In NER, TFIIH acts by opening DNA around the lesion to allow the excision of the damaged oligonucleotide and its replacement by a new DNA fragment. The structure of the TFIIH transcription complex differs from the NER-TFIIH complex; large movements by XPD/ERCC2 and XPB/ERCC3 are stabilized by XPA. XPA retains XPB/ERCC3 at the 5' end of a DNA bubble (mimicking DNA damage). The protein is General transcription and DNA repair factor IIH helicase/translocase subunit XPB of Homo sapiens (Human).